Here is a 118-residue protein sequence, read N- to C-terminus: DNA-binding protein inhibitor ID-3-B (118 aa).

Residues 32–84 (SLKGAGIDETMGLLYDMNGCYSKLKELVPGIPQGSKLSQVEILQHVIDYIFDL) form the bHLH domain.

Homodimer. Heterodimer with other HLH proteins. Interacts (via HLH domain) with the bHLH protein hes4/hairy2 (via Orange domain). Interacts with stat3.

It is found in the nucleus. In terms of biological role, transcriptional regulator (lacking a basic DNA binding domain) which negatively regulates the basic helix-loop-helix (bHLH) transcription factors by forming heterodimers and inhibiting their DNA binding and transcriptional activity. Influences cell fate decisions in the embryo by sequestering and blocking the activity of the bHLH transcription factors that control these decisions. Inhibits the binding of myogenic bHLH-containing complexes to E-box DNA, thereby preventing activation of muscle-specific target genes. Also inhibits the activity of neurogenic factor neurod1/neuroD. Plays a role in cell cycle progression and survival of neural crest progenitors; binding to either hes4-B/hairy2b or stat3 blocks the formation of transcription factor complexes and the repressor function of hes4-B/hairy2B, to allow neural crest progenitors to differentiate. May play a role in the regulation of the circadian rhythm. The chain is DNA-binding protein inhibitor ID-3-B (id3-b) from Xenopus laevis (African clawed frog).